A 1319-amino-acid chain; its full sequence is Girdin homolog (1319 aa).

Positions 6–118 constitute a Calponin-homology (CH) domain; sequence ENWSHPLAFW…KLLLLLLGCA (113 aa). Coiled coils occupy residues 141–173, 218–690, and 732–1096; these read ELAA…TDEV, TSEL…ADLI, and KRER…KKST. Positions 166 to 222 are disordered; that stretch reads KMKETDEVGGGGGSIEDVDSDDMESSTTSSSNGEIAIKQQDQSFLMSRSTSPTSELR. Positions 204-222 are enriched in polar residues; the sequence is QQDQSFLMSRSTSPTSELR. Disordered stretches follow at residues 1112-1236 and 1289-1308; these read INRR…SPAH and NVNL…LKPN. A compositionally biased stretch (polar residues) spans 1118-1131; that stretch reads TSNGGSTTEDSSVY.

It belongs to the CCDC88 family. In terms of tissue distribution, expressed in AQR and PQR gas-sensing neurons in hermaphrodites (at protein level).

It localises to the cytoplasm. The protein localises to the cytoskeleton. It is found in the cilium basal body. The protein resides in the microtubule organizing center. Its subcellular location is the centrosome. It localises to the centriole. In terms of biological role, scaffolding protein that plays a role in ciliogenesis, cilium positioning and dendrite anchoring in sensory amphid neurons including AWB, AWA, AWC, ADL and ASI, the phasmid neurons PHA and PHB and the gas sensing neurons AQR, PQR, URX and BAG. Its role in cilium positioning may be through regulation of the localization of cell adhesion proteins such as the apical junction protein ajm-1, and the ciliary scaffolding protein Rootletin/che-10. Plays a more prominent role in regulating dendrite morphogenesis in AQR than in PQR neurons. Regulates localization of hmr-1 to the distal AQR dendrite. During embryonic elongation, required for the anchoring of URX and BAG dendrites to the presumptive nose. The chain is Girdin homolog from Caenorhabditis elegans.